We begin with the raw amino-acid sequence, 145 residues long: D-aminoacyl-tRNA deacylase (145 aa).

The short motif at 137-138 (GP) is the Gly-cisPro motif, important for rejection of L-amino acids element.

Belongs to the DTD family. As to quaternary structure, homodimer.

It localises to the cytoplasm. The catalysed reaction is glycyl-tRNA(Ala) + H2O = tRNA(Ala) + glycine + H(+). It catalyses the reaction a D-aminoacyl-tRNA + H2O = a tRNA + a D-alpha-amino acid + H(+). Functionally, an aminoacyl-tRNA editing enzyme that deacylates mischarged D-aminoacyl-tRNAs. Also deacylates mischarged glycyl-tRNA(Ala), protecting cells against glycine mischarging by AlaRS. Acts via tRNA-based rather than protein-based catalysis; rejects L-amino acids rather than detecting D-amino acids in the active site. By recycling D-aminoacyl-tRNA to D-amino acids and free tRNA molecules, this enzyme counteracts the toxicity associated with the formation of D-aminoacyl-tRNA entities in vivo and helps enforce protein L-homochirality. This chain is D-aminoacyl-tRNA deacylase, found in Lactobacillus delbrueckii subsp. bulgaricus (strain ATCC 11842 / DSM 20081 / BCRC 10696 / JCM 1002 / NBRC 13953 / NCIMB 11778 / NCTC 12712 / WDCM 00102 / Lb 14).